A 479-amino-acid polypeptide reads, in one-letter code: Glycogen synthase (479 aa).

Lys15 contributes to the ADP-alpha-D-glucose binding site.

This sequence belongs to the glycosyltransferase 1 family. Bacterial/plant glycogen synthase subfamily.

It catalyses the reaction [(1-&gt;4)-alpha-D-glucosyl](n) + ADP-alpha-D-glucose = [(1-&gt;4)-alpha-D-glucosyl](n+1) + ADP + H(+). It participates in glycan biosynthesis; glycogen biosynthesis. Functionally, synthesizes alpha-1,4-glucan chains using ADP-glucose. This chain is Glycogen synthase, found in Pectobacterium carotovorum subsp. carotovorum (strain PC1).